A 64-amino-acid polypeptide reads, in one-letter code: MAGHKVAHATLKGPSVVKELFIGLALGLAAGGLWKMHHWNEQRKTRTFYDLLERGEISVVAAEE.

Residues 15–34 (SVVKELFIGLALGLAAGGLW) traverse the membrane as a helical segment.

Belongs to the cytochrome c oxidase subunit 5C family.

Its subcellular location is the mitochondrion inner membrane. Functionally, this protein is one of the nuclear-coded polypeptide chains of cytochrome c oxidase, the terminal oxidase in mitochondrial electron transport. The polypeptide is Probable cytochrome c oxidase subunit 5C-1 (Arabidopsis thaliana (Mouse-ear cress)).